A 59-amino-acid chain; its full sequence is MEEKYETNGYDTSIVYDYKEYPDVKYGRCDNCDYTLFKSSVKSGIFLRECRRCGMKKSI.

This is an uncharacterized protein from Bacillus subtilis (strain 168).